The sequence spans 283 residues: Thymidylate synthase (283 aa).

Arg-22 is a binding site for dUMP. Cys-160 (nucleophile) is an active-site residue. DUMP contacts are provided by residues 180–183 (RSCD), Asn-191, and 221–223 (HIY). Asp-183 lines the (6R)-5,10-methylene-5,6,7,8-tetrahydrofolate pocket. (6R)-5,10-methylene-5,6,7,8-tetrahydrofolate is bound at residue Ser-282.

This sequence belongs to the thymidylate synthase family. Bacterial-type ThyA subfamily. Homodimer.

Its subcellular location is the cytoplasm. The catalysed reaction is dUMP + (6R)-5,10-methylene-5,6,7,8-tetrahydrofolate = 7,8-dihydrofolate + dTMP. The protein operates within pyrimidine metabolism; dTTP biosynthesis. In terms of biological role, catalyzes the reductive methylation of 2'-deoxyuridine-5'-monophosphate (dUMP) to 2'-deoxythymidine-5'-monophosphate (dTMP) while utilizing 5,10-methylenetetrahydrofolate (mTHF) as the methyl donor and reductant in the reaction, yielding dihydrofolate (DHF) as a by-product. This enzymatic reaction provides an intracellular de novo source of dTMP, an essential precursor for DNA biosynthesis. The chain is Thymidylate synthase from Pseudoalteromonas translucida (strain TAC 125).